A 312-amino-acid chain; its full sequence is Isochorismatase (312 aa).

The 74-residue stretch at 229–302 (VFTCENIRKQ…EWQKLLTTRS (74 aa)) folds into the Carrier domain. Serine 263 carries the O-(pantetheine 4'-phosphoryl)serine modification.

Belongs to the isochorismatase family.

The catalysed reaction is isochorismate + H2O = (2S,3S)-2,3-dihydroxy-2,3-dihydrobenzoate + pyruvate. It functions in the pathway siderophore biosynthesis; bacillibactin biosynthesis. This is Isochorismatase (dhbB) from Bacillus subtilis (strain 168).